Reading from the N-terminus, the 38-residue chain is MTTSLANFIASLTAGALVLSAIGIALIIISKNDRVQRS.

The helical transmembrane segment at 9–29 threads the bilayer; the sequence is IASLTAGALVLSAIGIALIII.

The protein belongs to the PsbX family. Type 1 subfamily. PSII is composed of 1 copy each of membrane proteins PsbA, PsbB, PsbC, PsbD, PsbE, PsbF, PsbH, PsbI, PsbJ, PsbK, PsbL, PsbM, PsbT, PsbX, PsbY, PsbZ, Psb30/Ycf12, at least 3 peripheral proteins of the oxygen-evolving complex and a large number of cofactors. It forms dimeric complexes.

The protein resides in the plastid. It localises to the chloroplast thylakoid membrane. In terms of biological role, involved in the binding and/or turnover of quinones at the Q(B) site of photosystem II (PSII). PSII is a light-driven water plastoquinone oxidoreductase, using light energy to abstract electrons from H(2)O, generating a proton gradient subsequently used for ATP formation. The polypeptide is Photosystem II reaction center protein X (Thalassiosira pseudonana (Marine diatom)).